The primary structure comprises 401 residues: Dihydrolipoyllysine-residue succinyltransferase component of 2-oxoglutarate dehydrogenase complex (401 aa).

Residues 2-77 enclose the Lipoyl-binding domain; sequence SVKIIVPSLG…AVGEEIGEIN (76 aa). Lys43 is modified (N6-lipoyllysine). A Peripheral subunit-binding (PSBD) domain is found at 115-152; the sequence is ILAPSVQKLVTENKLDPNNIKGTGRDGRITKGDVLETI. Residues His372 and Asp376 contribute to the active site.

Belongs to the 2-oxoacid dehydrogenase family. In terms of assembly, forms a 24-polypeptide structural core with octahedral symmetry. Part of the 2-oxoglutarate dehydrogenase (OGDH) complex composed of E1 (2-oxoglutarate dehydrogenase), E2 (dihydrolipoamide succinyltransferase) and E3 (dihydrolipoamide dehydrogenase); the complex contains multiple copies of the three enzymatic components (E1, E2 and E3). The cofactor is (R)-lipoate.

The enzyme catalyses N(6)-[(R)-dihydrolipoyl]-L-lysyl-[protein] + succinyl-CoA = N(6)-[(R)-S(8)-succinyldihydrolipoyl]-L-lysyl-[protein] + CoA. Its pathway is amino-acid degradation; L-lysine degradation via saccharopine pathway; glutaryl-CoA from L-lysine: step 6/6. Functionally, E2 component of the 2-oxoglutarate dehydrogenase (OGDH) complex which catalyzes the second step in the conversion of 2-oxoglutarate to succinyl-CoA and CO(2). The chain is Dihydrolipoyllysine-residue succinyltransferase component of 2-oxoglutarate dehydrogenase complex (sucB) from Rickettsia felis (strain ATCC VR-1525 / URRWXCal2) (Rickettsia azadi).